Consider the following 359-residue polypeptide: Peptide chain release factor 1 (359 aa).

N5-methylglutamine is present on glutamine 233.

This sequence belongs to the prokaryotic/mitochondrial release factor family. In terms of processing, methylated by PrmC. Methylation increases the termination efficiency of RF1.

Its subcellular location is the cytoplasm. Its function is as follows. Peptide chain release factor 1 directs the termination of translation in response to the peptide chain termination codons UAG and UAA. The protein is Peptide chain release factor 1 of Ruminiclostridium cellulolyticum (strain ATCC 35319 / DSM 5812 / JCM 6584 / H10) (Clostridium cellulolyticum).